We begin with the raw amino-acid sequence, 169 residues long: Shikimate kinase (169 aa).

An ATP-binding site is contributed by 12-17 (GAGKST). S16 provides a ligand contact to Mg(2+). Positions 34, 58, and 80 each coordinate substrate. R117 contributes to the ATP binding site. R136 serves as a coordination point for substrate.

This sequence belongs to the shikimate kinase family. In terms of assembly, monomer. Mg(2+) serves as cofactor.

It is found in the cytoplasm. The enzyme catalyses shikimate + ATP = 3-phosphoshikimate + ADP + H(+). The protein operates within metabolic intermediate biosynthesis; chorismate biosynthesis; chorismate from D-erythrose 4-phosphate and phosphoenolpyruvate: step 5/7. Catalyzes the specific phosphorylation of the 3-hydroxyl group of shikimic acid using ATP as a cosubstrate. The sequence is that of Shikimate kinase from Rhodococcus erythropolis (strain PR4 / NBRC 100887).